A 709-amino-acid chain; its full sequence is Protein transport protein SEC39 (709 aa).

This sequence belongs to the SEC39 family. In terms of assembly, component of a peripheral membrane protein complex consisting of DSL1, SEC39/DSL3 and TIP20. Bound to a SNARE complex consisting of UFE1, USE1, SEC20 and SEC22 or YKT6 through direct interaction of TIP20 with SEC20. Interacts with TIP20 and DSL1.

Its subcellular location is the endoplasmic reticulum membrane. Functionally, required for protein transport between the Golgi and the endoplasmic reticulum. May contribute to tethering of coatomer-coated retrograde transport vesicles to the ER membrane through interaction with and stabilization of the SNARE complex. This Saccharomyces cerevisiae (strain ATCC 204508 / S288c) (Baker's yeast) protein is Protein transport protein SEC39.